The sequence spans 329 residues: Fructose-1,6-bisphosphatase class 1 (329 aa).

Mg(2+) contacts are provided by glutamate 84, aspartate 103, leucine 105, and aspartate 106. Residues 106–109 (DGSS), asparagine 196, and lysine 262 contribute to the substrate site. Glutamate 268 contacts Mg(2+).

It belongs to the FBPase class 1 family. Homotetramer. Mg(2+) is required as a cofactor.

The protein resides in the cytoplasm. It catalyses the reaction beta-D-fructose 1,6-bisphosphate + H2O = beta-D-fructose 6-phosphate + phosphate. It functions in the pathway carbohydrate biosynthesis; gluconeogenesis. In Shewanella woodyi (strain ATCC 51908 / MS32), this protein is Fructose-1,6-bisphosphatase class 1.